We begin with the raw amino-acid sequence, 559 residues long: Kelch repeat and BTB domain-containing protein 2 (559 aa).

The 70-residue stretch at 26–95 folds into the BTB domain; that stretch reads CDVIITIGDG…LYNRHISSMN (70 aa). A BACK domain is found at 128–223; that stretch reads CIYIYHRLYE…CIDIQNLDKK (96 aa). Kelch repeat units lie at residues 305-352, 353-399, and 401-463; these read EIII…VIDD, MIYA…VFDQ, and IYII…SHKD.

As to quaternary structure, interacts (via BTB domain) with host CUL3.

The protein localises to the host cytoplasm. Functionally, probable substrate-specific adapter of CUL3-containing E3 ubiquitin-protein ligases which mediate the ubiquitination and subsequent proteasomal degradation of host target proteins. This chain is Kelch repeat and BTB domain-containing protein 2 (KBTB2), found in Mus musculus (Mouse).